A 301-amino-acid polypeptide reads, in one-letter code: 3-dehydroquinate dehydratase (301 aa).

The 3-dehydroquinate dehydratase stretch occupies residues 1-221 (MLQYGVLICG…YYAALLALGI (221 aa)). 3-dehydroquinate-binding positions include 32-34 (ELR) and Arg63. The Proton donor/acceptor role is filled by His119. The active-site Schiff-base intermediate with substrate is Lys145. The 3-dehydroquinate site is built by Arg183, Thr202, and Gln206. One can recognise a Chorismate mutase domain in the interval 222 to 301 (TPSGGGLPAL…QMCKAVQLVA (80 aa)).

This sequence belongs to the type-I 3-dehydroquinase family. As to quaternary structure, homodimer.

The enzyme catalyses 3-dehydroquinate = 3-dehydroshikimate + H2O. The protein operates within metabolic intermediate biosynthesis; chorismate biosynthesis; chorismate from D-erythrose 4-phosphate and phosphoenolpyruvate: step 3/7. Its function is as follows. Involved in the third step of the chorismate pathway, which leads to the biosynthesis of aromatic amino acids. Catalyzes the cis-dehydration of 3-dehydroquinate (DHQ) and introduces the first double bond of the aromatic ring to yield 3-dehydroshikimate. In Pyrobaculum aerophilum (strain ATCC 51768 / DSM 7523 / JCM 9630 / CIP 104966 / NBRC 100827 / IM2), this protein is 3-dehydroquinate dehydratase.